The primary structure comprises 87 residues: Protein anon-73B1 (87 aa).

A helical membrane pass occupies residues 25–47 (LLIRYGLYVGALFQFVCISAAVL). Residues 50 to 87 (NNPDSQSNPETGEVTEREGEPVRTRLHKIRKLEKKKRR) form a disordered region. Positions 63 to 72 (VTEREGEPVR) are enriched in basic and acidic residues. Basic residues predominate over residues 73 to 87 (TRLHKIRKLEKKKRR).

Belongs to the UPF0239 family.

The protein localises to the membrane. The protein is Protein anon-73B1 (anon-73B1) of Drosophila simulans (Fruit fly).